We begin with the raw amino-acid sequence, 231 residues long: NADH-ubiquinone oxidoreductase chain 4 (231 aa).

6 consecutive transmembrane segments (helical) span residues 1-21 (PIAG…YGII), 34-54 (MFLP…LTCL), 63-85 (IAYS…TPWG), 89-111 (AMAL…NTTY), 128-148 (ILPM…AIPP), and 169-189 (TIIL…HMLL).

Belongs to the complex I subunit 4 family.

It localises to the mitochondrion membrane. The enzyme catalyses a ubiquinone + NADH + 5 H(+)(in) = a ubiquinol + NAD(+) + 4 H(+)(out). Functionally, core subunit of the mitochondrial membrane respiratory chain NADH dehydrogenase (Complex I) that is believed to belong to the minimal assembly required for catalysis. Complex I functions in the transfer of electrons from NADH to the respiratory chain. The immediate electron acceptor for the enzyme is believed to be ubiquinone. The polypeptide is NADH-ubiquinone oxidoreductase chain 4 (MT-ND4) (Bothrops bilineatus (Green jararaca)).